A 260-amino-acid chain; its full sequence is tRNA pseudouridine synthase C (260 aa).

Residue Asp-54 is part of the active site.

The protein belongs to the pseudouridine synthase RluA family.

It catalyses the reaction uridine(65) in tRNA = pseudouridine(65) in tRNA. Responsible for synthesis of pseudouridine from uracil-65 in transfer RNAs. This is tRNA pseudouridine synthase C (truC) from Salmonella typhi.